Reading from the N-terminus, the 232-residue chain is Transcriptional regulatory protein CpxR (232 aa).

A Response regulatory domain is found at K3–L115. 4-aspartylphosphate is present on D51. Residues S131–S230 constitute a DNA-binding region (ompR/PhoB-type).

In terms of assembly, interacts with cognate sensor kinase CpxA. Post-translationally, phosphorylated by CpxA.

The protein localises to the cytoplasm. Its activity is regulated as follows. The two-component system is activated by envelope stress such as overexpression of some (misfolded) periplasmic proteins. In terms of biological role, response regulator member of the two-component regulatory system CpxA/CpxR which responds to envelope stress response by activating or, in some cases, repressing expression of downstream genes. Binds to the promoter regions of various genes in vitro, including ompC, cpxP, ryhB and mrkA and, when CpxR is phosphorylated, pecO. Represses expression of the major pilin of type 3 fimbriae MrkA as well as that of type 1 fimbriae FimA. Repression of expression of MrkA appears to be indirect, mediated by activation of the iron homeostasis regulator RyhB. The chain is Transcriptional regulatory protein CpxR from Klebsiella pneumoniae subsp. pneumoniae (strain HS11286).